Here is a 157-residue protein sequence, read N- to C-terminus: uncharacterized protein (157 aa).

This is an uncharacterized protein from Acidianus hospitalis (AFV-1).